Consider the following 306-residue polypeptide: Pantothenate kinase (306 aa).

91–98 (GSVAVGKS) serves as a coordination point for ATP.

The protein belongs to the prokaryotic pantothenate kinase family.

The protein localises to the cytoplasm. It carries out the reaction (R)-pantothenate + ATP = (R)-4'-phosphopantothenate + ADP + H(+). It functions in the pathway cofactor biosynthesis; coenzyme A biosynthesis; CoA from (R)-pantothenate: step 1/5. This Streptococcus gordonii (strain Challis / ATCC 35105 / BCRC 15272 / CH1 / DL1 / V288) protein is Pantothenate kinase.